The chain runs to 214 residues: Transmembrane emp24 domain-containing protein p24delta10 (214 aa).

Positions 1–24 are cleaved as a signal peptide; sequence MFLQSQKLWTMLLILAIWSPISHS. The Lumenal portion of the chain corresponds to 25-181; sequence LHFDLHSGRT…QDLNRSTNTK (157 aa). The GOLD domain occupies 34–149; the sequence is TKCIAEDIKS…VEVMEFEVKS (116 aa). A coiled-coil region spans residues 164-177; that stretch reads LRDREEEMQDLNRS. Arginine 167 carries the omega-N-methylated arginine modification. N-linked (GlcNAc...) asparagine glycosylation is present at asparagine 175. A helical transmembrane segment spans residues 182–202; sequence MAWLSVLSFFVCIGVAGMQFL. Residues 203–214 are Cytoplasmic-facing; the sequence is HLKTFFEKKKVI. Residues 207 to 208 carry the COPII vesicle coat-binding motif; it reads FF. A COPI vesicle coat-binding motif is present at residues 207-214; that stretch reads FFEKKKVI.

The protein belongs to the EMP24/GP25L family. In terms of assembly, probably oligomerizes with other members of the EMP24/GP25L family. Associates with the COPI vesicle coat (coatomer). Associates with the COPII vesicle coat (coatomer).

Its subcellular location is the endoplasmic reticulum membrane. The protein localises to the golgi apparatus. It is found in the cis-Golgi network membrane. The protein resides in the golgi stack membrane. Involved in vesicular protein trafficking. Mainly functions in the early secretory pathway. Thought to act as cargo receptor at the lumenal side for incorporation of secretory cargo molecules into transport vesicles and to be involved in vesicle coat formation at the cytoplasmic side. The chain is Transmembrane emp24 domain-containing protein p24delta10 from Arabidopsis thaliana (Mouse-ear cress).